A 154-amino-acid polypeptide reads, in one-letter code: Putative pre-16S rRNA nuclease (154 aa).

This sequence belongs to the YqgF nuclease family.

Its subcellular location is the cytoplasm. Could be a nuclease involved in processing of the 5'-end of pre-16S rRNA. The chain is Putative pre-16S rRNA nuclease from Rickettsia rickettsii (strain Iowa).